A 446-amino-acid polypeptide reads, in one-letter code: Phosphoglucosamine mutase (446 aa).

The active-site Phosphoserine intermediate is the S101. The Mg(2+) site is built by S101, D240, D242, and D244. S101 carries the post-translational modification Phosphoserine.

It belongs to the phosphohexose mutase family. It depends on Mg(2+) as a cofactor. In terms of processing, activated by phosphorylation.

It catalyses the reaction alpha-D-glucosamine 1-phosphate = D-glucosamine 6-phosphate. Functionally, catalyzes the conversion of glucosamine-6-phosphate to glucosamine-1-phosphate. The polypeptide is Phosphoglucosamine mutase (Pseudomonas entomophila (strain L48)).